We begin with the raw amino-acid sequence, 184 residues long: Large ribosomal subunit protein uL6 (184 aa).

Belongs to the universal ribosomal protein uL6 family. In terms of assembly, part of the 50S ribosomal subunit.

In terms of biological role, this protein binds to the 23S rRNA, and is important in its secondary structure. It is located near the subunit interface in the base of the L7/L12 stalk, and near the tRNA binding site of the peptidyltransferase center. This chain is Large ribosomal subunit protein uL6, found in Aster yellows witches'-broom phytoplasma (strain AYWB).